We begin with the raw amino-acid sequence, 776 residues long: MVHLSPLLRPLAAFSFFTSLASTESIFPDCSTGPLSKNNVCDTSLDPVSRAKSLVAAMTLEEKINNTKYDSSGAPRLGLPAYNWWNEALHGVAEGHGVSFSDSGNFSYATSFPMPILLGAAFDDDLVKQVATVISTEARAFANGGHAGLDYWTPNINPFRDPRWGRGQETPGEDPLHLSRYVYHLVDGLQDGIGPERPKVVATCKHFAAYDLENWEGIERYAFDAVVSPQDLSEYYLPSFKTCTRDAKVDAVMCSYNSLNGIPTCADRWLLQTLLREHWGWEQTGHWVTGDCGAIDNIYADHHYVADGAHAAAAALNAGTDLDCGSVFPEYLRSALQQGLYNNQTLNNALIRLYSSLVKLGYFDPADDQPYRSIGWNEVFTPAAEELAHKATVEGIVMLKNDGTLPLKSNGTVAIIGPFANATTQLQGNYEGPPKYIRTLIWAAVHNGYKVKFSQGTDINSNSSAGFAEAISAAKEADTVIYAGGIDNTIEKESQDRTTIVWPGNQLDLIEQLSDLEKPLIVVQFGGGQVDDSSLLANAGVGALLWAGYPSQAGGAAVFDILTGKSAPAGRLPVTQYPASYVDEVPMTDMTLRPGSNNPGRTYRWYDKAVLPFGFGLHYTTFNVSWNHAEYGPYNTDSVASGTTNAPVDTELFDTFSITVTNTGNVASDYIALLFLTADRVGPEPYPIKTLVGYSRAKGIEPGQSQQVKLDVSVGSVARTAENGDLVLYPGSYKLEVDVGQDFPTATFTVSGKEKVLDEFPEPQQNATSAVTRWGR.

The first 23 residues, 1 to 23 (MVHLSPLLRPLAAFSFFTSLAST), serve as a signal peptide directing secretion. N-linked (GlcNAc...) asparagine glycans are attached at residues N65 and N105. D291 is a catalytic residue. N343, N410, N421, N462, N623, and N766 each carry an N-linked (GlcNAc...) asparagine glycan.

This sequence belongs to the glycosyl hydrolase 3 family.

Its subcellular location is the secreted. It carries out the reaction Hydrolysis of (1-&gt;4)-beta-D-xylans, to remove successive D-xylose residues from the non-reducing termini.. It participates in glycan degradation; xylan degradation. Xylan 1,4-beta-xylosidase involved in the hydrolysis of xylan, a major structural heterogeneous polysaccharide found in plant biomass representing the second most abundant polysaccharide in the biosphere, after cellulose. The protein is Probable exo-1,4-beta-xylosidase bxlB (bxlB) of Aspergillus flavus (strain ATCC 200026 / FGSC A1120 / IAM 13836 / NRRL 3357 / JCM 12722 / SRRC 167).